The chain runs to 91 residues: Cytochrome b-c1 complex subunit 10, mitochondrial (91 aa).

The Mitochondrial matrix portion of the chain corresponds to 1 to 34 (MFATSILRSAYPAYKSPYGPKYQYQPHIDGITPK). A helical membrane pass occupies residues 35–58 (QLVRILPTAAAWTGVALFAVVYYA). Topologically, residues 59–91 (SGIPRLRRDVLQRIPYLGERYFVNEIPASDNPF) are mitochondrial intermembrane.

Belongs to the UQCR11/QCR10 family. As to quaternary structure, component of the ubiquinol-cytochrome c oxidoreductase (cytochrome b-c1 complex, complex III, CIII), a multisubunit enzyme composed of 10 subunits. The complex is composed of 3 respiratory subunits cytochrome b (cob), cytochrome c1 (cyt-1) and Rieske protein (fes-1), 2 core protein subunits pep and ucr-1, and 5 low-molecular weight protein subunits qcr6, qcr7, qcr8, qcr9 and probably NCU16844/qcr10. The complex exists as an obligatory dimer and forms supercomplexes (SCs) in the inner mitochondrial membrane with NADH-ubiquinone oxidoreductase (complex I, CI) and cytochrome c oxidase (complex IV, CIV), resulting in different assemblies (supercomplexes SCI(1)III(2), SCIII(2)IV(1) and SCIII(2)IV(2) as well as higher order I(x)III(y)IV(z) megacomplexes).

It localises to the mitochondrion inner membrane. In terms of biological role, component of the ubiquinol-cytochrome c oxidoreductase, a multisubunit transmembrane complex that is part of the mitochondrial electron transport chain which drives oxidative phosphorylation. The respiratory chain contains 3 multisubunit complexes succinate dehydrogenase (complex II, CII), ubiquinol-cytochrome c oxidoreductase (cytochrome b-c1 complex, complex III, CIII) and cytochrome c oxidase (complex IV, CIV), that cooperate to transfer electrons derived from NADH and succinate to molecular oxygen, creating an electrochemical gradient over the inner membrane that drives transmembrane transport and the ATP synthase. The cytochrome b-c1 complex catalyzes electron transfer from ubiquinol to cytochrome c, linking this redox reaction to translocation of protons across the mitochondrial inner membrane, with protons being carried across the membrane as hydrogens on the quinol. In the process called Q cycle, 2 protons are consumed from the matrix, 4 protons are released into the intermembrane space and 2 electrons are passed to cytochrome c. This Neurospora crassa (strain ATCC 24698 / 74-OR23-1A / CBS 708.71 / DSM 1257 / FGSC 987) protein is Cytochrome b-c1 complex subunit 10, mitochondrial.